A 315-amino-acid chain; its full sequence is Phage tubulin-like protein (315 aa).

GTP-binding positions include glycine 13 to threonine 14 and glycine 93 to glycine 95.

It belongs to the FtsZ family. PhuZ subfamily. As to quaternary structure, homomultimer. Polymerizes in a strictly GTP-dependent manner.

The protein localises to the host cytoplasm. The catalysed reaction is GTP + H2O = GDP + phosphate + H(+). With respect to regulation, the non-hydrolyzable GTP analog GMPCPP stabilizes filaments, which never disassemble. A tubulin-like GTPase that forms filaments, which are required for positioning viral DNA and capsids in the middle of the host cell for optimal replication. The motor component of a partition system which pushes phage DNA (encased by protein gp105) to the center of the bacterial host cell. Also required for movement of phage capsids to the vicinity of the DNA and rotation of the encased viral DNA at midcell. Forms filaments during the lytic phase, which position phage DNA at the center of the bacterial host cell. Filaments have a three-stranded intertwined architecture and form a spindle-like cytoskeleton within the infected cell. Has GTPase activity. Filaments grow at the plus end and depolymerize at the minus end, a process called treadmilling, and switch from growing in a polar manner to catastrophic depolymerization, i.e. they display dynamic instability, like tubulin. In infected host cells the filament ends close to the cell pole are relatively stable, while the other end near the phage DNA is highly dynamic. Both capsid movement and DNA rotation probably require treadmilling. The polypeptide is Phage tubulin-like protein (Pseudomonas aeruginosa (Pseudomonas aeruginosa phage PhiPA3)).